A 46-amino-acid polypeptide reads, in one-letter code: Endochitinase 1A (46 aa).

Belongs to the glycosyl hydrolase 19 family. Chitinase class I subfamily.

It catalyses the reaction Random endo-hydrolysis of N-acetyl-beta-D-glucosaminide (1-&gt;4)-beta-linkages in chitin and chitodextrins.. Its function is as follows. Defense against chitin-containing fungal and bacterial pathogens. In Arachis hypogaea (Peanut), this protein is Endochitinase 1A.